We begin with the raw amino-acid sequence, 510 residues long: Aspartate kinase FUB3 (510 aa).

ACT domains are found at residues 372 to 440 and 446 to 510; these read ILSN…VLPD and LVGA…KNAM.

Belongs to the aspartokinase family.

The enzyme catalyses L-aspartate + ATP = 4-phospho-L-aspartate + ADP. The protein operates within mycotoxin biosynthesis. Functionally, aspartate kinase; part of the gene cluster that mediates the biosynthesis of fusaric acid, a mycotoxin with low to moderate toxicity to animals and humans, but with high phytotoxic properties. L-aspartate is suggested as fusaric acid amino acid precursor that is activated and further processed to O-acetyl-L-homoserine by cluster enzymes aspartate kinase FUB3 and homoserine O-acetyltransferase FUB5, as well as enzymes of the primary metabolism. The polyketide synthase (PKS) FUB1 generates the triketide trans-2-hexenal which is presumptively released by the hydrolase FUB4 and linked to the NRPS-bound amino acid precursor by NAD(P)-dependent dehydrogenase FUB6. FUB1, FUB4, and the non-canonical NRPS Fub8 may form an enzyme complex. Further processing of the NRPS-bound intermediate might be carried out by FUB6 and the sulfhydrylase FUB7, enabling a spontaneous electrocyclization to close the carbon backbone of fusaric acid. Dihydrofusaric acid is likely to be released via reduction by the thioester reductase (TR) domain of FUB8 whereupon the final oxidation to fusaric acid may (also) be performed by the FMN-dependent dehydrogenase FUB9. The chain is Aspartate kinase FUB3 from Gibberella moniliformis (strain M3125 / FGSC 7600) (Maize ear and stalk rot fungus).